A 371-amino-acid chain; its full sequence is ADP-ribosylarginine hydrolase Tri1 (371 aa).

Residues 1–61 form an N-terminal extension region; sequence MIDLRSPNAL…LQSRACTLTP (61 aa). The interval 70-362 is ADP-ribosyl hydrolase domain; sequence GALLGLAIGD…LFDRAPQVDE (293 aa). Mg(2+) contacts are provided by Thr-112, Asp-113, Asp-114, Asp-157, and Asp-313.

It belongs to the ADP-ribosylglycohydrolase family. Mg(2+) serves as cofactor.

It catalyses the reaction N(omega)-(ADP-D-ribosyl)-L-arginyl-[protein] + H2O = ADP-D-ribose + L-arginyl-[protein]. Immunity component of an interbacterial competition system (also called effector-immunity systems). Expression in E.coli neutralizes the toxic effects of non-cognate S.proteamaculans effector protein Tre1 (Tre1-Sp); cannot be co-purified with Tre1-Sp from E.coli, suggesting they do not form a stable complex. Probably acts as an arginine mono-ADP-ribosylhydrolase, mediating the removal of mono-ADP-ribose attached to arginine residues on proteins. Probably de-ADP-ribosylates FtsZ and possibly other proteins; the ability to hydrolyze ADP-ribosyl moieties is not essential for neutralization of its cognate toxin, strongly suggesting its N-terminal extension occludes the active site of cognate toxin Tre1. The sequence is that of ADP-ribosylarginine hydrolase Tri1 from Pseudomonas putida (strain GB-1).